We begin with the raw amino-acid sequence, 245 residues long: Endo-chitosanase (245 aa).

The first 17 residues, 1–17 (MHFAGIVAIALATGATA), serve as a signal peptide directing secretion.

Belongs to the glycosyl hydrolase 75 family.

It localises to the secreted. The catalysed reaction is Endohydrolysis of beta-(1-&gt;4)-linkages between D-glucosamine residues in a partly acetylated chitosan.. In terms of biological role, chitosanase catalyzing the endo-type cleavage of chitosan, the deacylated form of chitin. Chitosanase may be crucial in the degradation of the deacetylated portion of chitin in the fungal cell wall. Chitoolisaccharides produced by the hydrolysis of partially N-acetylated chitosan are known to have many biological activities, including antibacterial activity, immune-enhancing effects, and elicitor activity. This is Endo-chitosanase (csn) from Aspergillus oryzae (strain ATCC 42149 / RIB 40) (Yellow koji mold).